Reading from the N-terminus, the 911-residue chain is Chitin synthase G (911 aa).

Disordered regions lie at residues 1–66 and 107–138; these read MAYQ…VSGY and GRVA…GGLR. Residues 12–34 show a composition bias toward basic and acidic residues; sequence PHYDDNGHRLQDLPHGSYEEEAS. Residues 54–66 are compositionally biased toward polar residues; the sequence is QHGSSTTRPVSGY. 6 helical membrane-spanning segments follow: residues 579–599, 624–644, 659–679, 711–731, 840–860, and 879–899; these read IFST…TTVI, IINT…FILA, SFVV…YLVV, IIII…FMYL, LVTF…SDGV, and ALLW…CWFL.

Belongs to the chitin synthase family. Class III subfamily.

The protein resides in the cell membrane. The catalysed reaction is [(1-&gt;4)-N-acetyl-beta-D-glucosaminyl](n) + UDP-N-acetyl-alpha-D-glucosamine = [(1-&gt;4)-N-acetyl-beta-D-glucosaminyl](n+1) + UDP + H(+). In terms of biological role, polymerizes chitin, a structural polymer of the cell wall and septum, by transferring the sugar moiety of UDP-GlcNAc to the non-reducing end of the growing chitin polymer. In Aspergillus fumigatus (strain ATCC MYA-4609 / CBS 101355 / FGSC A1100 / Af293) (Neosartorya fumigata), this protein is Chitin synthase G (chsG).